The primary structure comprises 575 residues: G protein-coupled receptor kinase 4 (575 aa).

Met1 carries the post-translational modification N-acetylmethionine. Residues 1 to 153 (MELENFMANT…DCAGVIYKYL (153 aa)) are N-terminal. One can recognise an RGS domain in the interval 51-171 (DFSSLCDQQP…QESTYYNRFL (121 aa)). Positions 186–448 (FRQYRVLGKG…ASAVKQHPIF (263 aa)) constitute a Protein kinase domain. Residues 192 to 200 (LGKGGFGEV) and Lys215 each bind ATP. The active-site Proton acceptor is Asp311. The AGC-kinase C-terminal domain occupies 449-514 (KDINFSRLEA…GCVTIPWQNE (66 aa)). At Ser484 the chain carries Phosphoserine.

This sequence belongs to the protein kinase superfamily. AGC Ser/Thr protein kinase family. GPRK subfamily. As to quaternary structure, interacts with DRD3. Post-translationally, palmitoylated. Isoform GRK4A is expressed in testis. Isoform GRK4B is heterogeneously distributed in the kidney, with 20-fold enrichment in the outer medulla. Has a widespread but low level of expression in tissues other than testis.

It is found in the cytoplasm. The protein localises to the cell cortex. The enzyme catalyses [G-protein-coupled receptor] + ATP = [G-protein-coupled receptor]-phosphate + ADP + H(+). Its activity is regulated as follows. Inhibited by heparin. Its function is as follows. Specifically phosphorylates the activated forms of G protein-coupled receptors. Plays an important role in the regulation of renal sodium handling and blood pressure. This is G protein-coupled receptor kinase 4 (Grk4) from Rattus norvegicus (Rat).